A 315-amino-acid chain; its full sequence is Energy-coupling factor transporter ATP-binding protein EcfA2 (315 aa).

In terms of domain architecture, ABC transporter spans 31 to 275 (IILDNVSYTY…QELLSKIQIE (245 aa)). Residue 68 to 75 (GTTGSGKS) coordinates ATP.

It belongs to the ABC transporter superfamily. Energy-coupling factor EcfA family. As to quaternary structure, forms a stable energy-coupling factor (ECF) transporter complex composed of 2 membrane-embedded substrate-binding proteins (S component), 2 ATP-binding proteins (A component) and 2 transmembrane proteins (T component).

The protein resides in the cell membrane. In terms of biological role, ATP-binding (A) component of a common energy-coupling factor (ECF) ABC-transporter complex. Unlike classic ABC transporters this ECF transporter provides the energy necessary to transport a number of different substrates. This Mesoplasma florum (strain ATCC 33453 / NBRC 100688 / NCTC 11704 / L1) (Acholeplasma florum) protein is Energy-coupling factor transporter ATP-binding protein EcfA2.